We begin with the raw amino-acid sequence, 203 residues long: Ribosomal RNA small subunit methyltransferase G (203 aa).

Residues glycine 75, leucine 80, 126 to 127, and arginine 141 each bind S-adenosyl-L-methionine; that span reads VE.

This sequence belongs to the methyltransferase superfamily. RNA methyltransferase RsmG family.

It localises to the cytoplasm. It carries out the reaction guanosine(527) in 16S rRNA + S-adenosyl-L-methionine = N(7)-methylguanosine(527) in 16S rRNA + S-adenosyl-L-homocysteine. Its function is as follows. Specifically methylates the N7 position of guanine in position 527 of 16S rRNA. This Ruthia magnifica subsp. Calyptogena magnifica protein is Ribosomal RNA small subunit methyltransferase G.